We begin with the raw amino-acid sequence, 413 residues long: Probable alpha-amylase 2 (413 aa).

Substrate is bound by residues 74–75 and 191–196; these read YL and RFDFAR. D193 (nucleophile) is an active-site residue. The Proton donor role is filled by E218. Substrate is bound by residues W220, S222, Q239, D246, K280, 286-288, H299, Q305, K386, and W411; that span reads GWW.

Belongs to the glycosyl hydrolase 13 family. It depends on Ca(2+) as a cofactor. As to expression, expressed in developing siliques.

It localises to the cytoplasm. Its subcellular location is the cytosol. It catalyses the reaction Endohydrolysis of (1-&gt;4)-alpha-D-glucosidic linkages in polysaccharides containing three or more (1-&gt;4)-alpha-linked D-glucose units.. Functionally, probable alpha-amylase that does not seem to be required for breakdown of transitory starch in leaves. The protein is Probable alpha-amylase 2 (AMY2) of Arabidopsis thaliana (Mouse-ear cress).